A 315-amino-acid chain; its full sequence is DNA-directed RNA polymerase subunit alpha (315 aa).

Residues 1 to 228 (MIEIEKPKIE…EHLNLFIDLS (228 aa)) are alpha N-terminal domain (alpha-NTD). The alpha C-terminal domain (alpha-CTD) stretch occupies residues 245 to 315 (KEKVLEMTIE…LGLSLAPSED (71 aa)).

Belongs to the RNA polymerase alpha chain family. In terms of assembly, homodimer. The RNAP catalytic core consists of 2 alpha, 1 beta, 1 beta' and 1 omega subunit. When a sigma factor is associated with the core the holoenzyme is formed, which can initiate transcription.

It catalyses the reaction RNA(n) + a ribonucleoside 5'-triphosphate = RNA(n+1) + diphosphate. Its function is as follows. DNA-dependent RNA polymerase catalyzes the transcription of DNA into RNA using the four ribonucleoside triphosphates as substrates. The sequence is that of DNA-directed RNA polymerase subunit alpha from Acetivibrio thermocellus (strain ATCC 27405 / DSM 1237 / JCM 9322 / NBRC 103400 / NCIMB 10682 / NRRL B-4536 / VPI 7372) (Clostridium thermocellum).